The chain runs to 131 residues: CLAVATA3/ESR (CLE)-related protein ESR1 (131 aa).

The N-terminal stretch at 1–26 (MASRMGMVAIVSLFVCALAASTSVNA) is a signal peptide. A disordered region spans residues 49 to 131 (RQQQQGGFIG…IGPPPLSDRY (83 aa)). Hydroxyproline is present on residues Pro-81 and Pro-84. Pro-84 carries an O-linked (Ara...) hydroxyproline glycan.

The protein belongs to the CLV3/ESR signal peptide family. Post-translationally, the O-glycosylation (arabinosylation) of the hydroxyproline Pro-84 enhances binding affinity of the ESR1p peptide for its receptor. Seed endosperm.

The protein localises to the secreted. It is found in the extracellular space. In terms of biological role, extracellular signal peptide that regulates cell fate. The polypeptide is CLAVATA3/ESR (CLE)-related protein ESR1 (Zea mays (Maize)).